Here is a 138-residue protein sequence, read N- to C-terminus: Transcription antitermination protein NusB (138 aa).

This sequence belongs to the NusB family.

Functionally, involved in transcription antitermination. Required for transcription of ribosomal RNA (rRNA) genes. Binds specifically to the boxA antiterminator sequence of the ribosomal RNA (rrn) operons. This Tolumonas auensis (strain DSM 9187 / NBRC 110442 / TA 4) protein is Transcription antitermination protein NusB.